Consider the following 210-residue polypeptide: ATP-dependent Clp protease proteolytic subunit (210 aa).

Ser-106 (nucleophile) is an active-site residue. Residue His-131 is part of the active site.

It belongs to the peptidase S14 family. In terms of assembly, fourteen ClpP subunits assemble into 2 heptameric rings which stack back to back to give a disk-like structure with a central cavity, resembling the structure of eukaryotic proteasomes.

The protein localises to the cytoplasm. It carries out the reaction Hydrolysis of proteins to small peptides in the presence of ATP and magnesium. alpha-casein is the usual test substrate. In the absence of ATP, only oligopeptides shorter than five residues are hydrolyzed (such as succinyl-Leu-Tyr-|-NHMec, and Leu-Tyr-Leu-|-Tyr-Trp, in which cleavage of the -Tyr-|-Leu- and -Tyr-|-Trp bonds also occurs).. Its function is as follows. Cleaves peptides in various proteins in a process that requires ATP hydrolysis. Has a chymotrypsin-like activity. Plays a major role in the degradation of misfolded proteins. The chain is ATP-dependent Clp protease proteolytic subunit from Bradyrhizobium sp. (strain BTAi1 / ATCC BAA-1182).